We begin with the raw amino-acid sequence, 273 residues long: Small ribosomal subunit protein uS3 (273 aa).

The 71-residue stretch at 40 to 110 folds into the KH type-2 domain; sequence IRNLFFVNYR…NLDLTINEIG (71 aa). The span at 244–265 shows a compositional bias: polar residues; sequence QVLSANKLTGSDVETSSIQALT. The segment at 244–273 is disordered; it reads QVLSANKLTGSDVETSSIQALTKPNKEDKQ.

Belongs to the universal ribosomal protein uS3 family. In terms of assembly, part of the 30S ribosomal subunit. Forms a tight complex with proteins S10 and S14.

Functionally, binds the lower part of the 30S subunit head. Binds mRNA in the 70S ribosome, positioning it for translation. In Mycoplasma pneumoniae (strain ATCC 29342 / M129 / Subtype 1) (Mycoplasmoides pneumoniae), this protein is Small ribosomal subunit protein uS3.